A 354-amino-acid polypeptide reads, in one-letter code: Probable cinnamyl alcohol dehydrogenase 5 (354 aa).

Zn(2+) is bound at residue Cys-43. Ser-45 contributes to the NADP(+) binding site. The Zn(2+) site is built by His-65, Glu-66, Cys-96, Cys-99, Cys-102, Cys-110, and Cys-159. Residues Thr-163, 184–189 (GLGGLG), 207–212 (SSSPGK), Thr-247, Gly-271, and 294–296 (SCI) contribute to the NADP(+) site.

The protein belongs to the zinc-containing alcohol dehydrogenase family. Homodimer. Zn(2+) serves as cofactor.

The enzyme catalyses (E)-cinnamyl alcohol + NADP(+) = (E)-cinnamaldehyde + NADPH + H(+). It catalyses the reaction (E)-coniferol + NADP(+) = (E)-coniferaldehyde + NADPH + H(+). It carries out the reaction (E)-sinapyl alcohol + NADP(+) = (E)-sinapaldehyde + NADPH + H(+). The catalysed reaction is (E)-4-coumaroyl alcohol + NADP(+) = (E)-4-coumaraldehyde + NADPH + H(+). The enzyme catalyses (E)-caffeyl alcohol + NADP(+) = (E)-caffeyl aldehyde + NADPH + H(+). Its pathway is aromatic compound metabolism; phenylpropanoid biosynthesis. In terms of biological role, involved in lignin biosynthesis. Catalyzes the final step specific for the production of lignin monomers. Catalyzes the NADPH-dependent reduction of coniferaldehyde, 5-hydroxyconiferaldehyde, sinapaldehyde, 4-coumaraldehyde and caffeyl aldehyde to their respective alcohols. The protein is Probable cinnamyl alcohol dehydrogenase 5 of Oryza sativa subsp. japonica (Rice).